Here is a 363-residue protein sequence, read N- to C-terminus: Flagellar P-ring protein (363 aa).

Positions 1 to 20 are cleaved as a signal peptide; that stretch reads MKKFTLLLLCFVLPMTSAYA.

It belongs to the FlgI family. In terms of assembly, the basal body constitutes a major portion of the flagellar organelle and consists of four rings (L,P,S, and M) mounted on a central rod.

The protein localises to the periplasm. The protein resides in the bacterial flagellum basal body. Functionally, assembles around the rod to form the L-ring and probably protects the motor/basal body from shearing forces during rotation. This chain is Flagellar P-ring protein, found in Vibrio vulnificus (strain YJ016).